Reading from the N-terminus, the 89-residue chain is Small ribosomal subunit protein uS15 (89 aa).

This sequence belongs to the universal ribosomal protein uS15 family. As to quaternary structure, part of the 30S ribosomal subunit. Forms a bridge to the 50S subunit in the 70S ribosome, contacting the 23S rRNA.

In terms of biological role, one of the primary rRNA binding proteins, it binds directly to 16S rRNA where it helps nucleate assembly of the platform of the 30S subunit by binding and bridging several RNA helices of the 16S rRNA. Functionally, forms an intersubunit bridge (bridge B4) with the 23S rRNA of the 50S subunit in the ribosome. The sequence is that of Small ribosomal subunit protein uS15 from Bifidobacterium longum (strain DJO10A).